The sequence spans 1055 residues: Activated CDC42 kinase 1 (1055 aa).

Positions 1 to 110 (MQPEEGTGWL…PSPTPGSLPG (110 aa)) are SAM-like domain. The segment at 91-110 (SQHSQSTFRKPSPTPGSLPG) is disordered. The residue at position 113 (Thr113) is a Phosphothreonine. One can recognise a Protein kinase domain in the interval 126–385 (LRLLEKLGDG…PTFVALRDFL (260 aa)). ATP is bound by residues 132–140 (LGDGSFGVV) and Lys158. Asp252 acts as the Proton acceptor in catalysis. Tyr284 bears the Phosphotyrosine; by SRC and autocatalysis mark. The SH3 domain occupies 388–448 (AQPTDMRALQ…PRNVVTSVAG (61 aa)). Residues 454–466 (ISQPLQNSFIHTG) form the CRIB domain. Residues 505-548 (RPTQHLGRVKREPPPRPPQPAIFTQKTTYDPVSEDPDPLSSDFK) form a disordered region. A phosphotyrosine mark is found at Pro518 and Tyr533. Positions 638-667 (DWDARPLPPPPAYDDVAQDEDDFEVCSINS) are required for interaction with SRC. Residues 647–650 (PPAY) form a required for interaction with NEDD4 region. A disordered region spans residues 737–855 (TGQLTPSPTP…QVIQAPGPRA (119 aa)). The segment at 748–891 (GDDKPQVPPR…PYLERYQRFL (144 aa)) is EBD domain. Pro residues-rich tracts occupy residues 753–764 (QVPPRVPIPPRP) and 787–798 (PASPPRVPPREP). Residues 817-827 (PLPHRLSSSPG) show a composition bias toward low complexity. Position 842 is a phosphotyrosine (Tyr842). At Arg854 the chain carries Omega-N-methylarginine. 2 positions are modified to phosphotyrosine: Tyr874 and Tyr887. Ser896 carries the post-translational modification Phosphoserine. A disordered region spans residues 896-952 (SPEEPAALPVPPLLPPPSTPAPAAPTATVRPMPQAAPDPKANFSTNNSNPGARPPSL). Pro residues predominate over residues 903 to 918 (LPVPPLLPPPSTPAPA). Positions 973–1013 (PADKVQMLQAMVHGVTTEECQAALQSHSWSVQRAAQYLKVE) constitute a UBA domain.

This sequence belongs to the protein kinase superfamily. Tyr protein kinase family. Homodimer. Interacts with CSPG4 (activated). Interacts with MERTK (activated); stimulates autophosphorylation. May interact (phosphorylated) with HSP90AB1; maintains kinase activity. Interacts with NPHP1. Interacts with SNX9 (via SH3 domain). Interacts with SRC (via SH2 and SH3 domain). Part of a collagen stimulated complex involved in cell migration composed of CDC42, CRK, TNK2 and BCAR1/p130cas. Interacts with BCAR1/p130cas via SH3 domains. Forms complexes with GRB2 and numerous receptor tyrosine kinases (RTK) including LTK, AXL or PDGFRL, in which GRB2 promotes RTK recruitment by TNK2. Interacts with CDC42. Interacts with EGFR, and this interaction is dependent on EGF stimulation and kinase activity of EGFR. Interacts (via kinase domain) with AKT1. Interacts with NEDD4 (via WW3 domain). NEDD4L and EGF promote association with NEDD4. Requires Mg(2+) as cofactor. Autophosphorylation regulates kinase activity. Phosphorylation on Tyr-533 is required for interaction with SRC and is observed during association with clathrin-coated pits. Post-translationally, polyubiquitinated by NEDD4 and NEDD4L. Degradation can be induced by EGF and is lysosome-dependent. As to expression, ubiquitously present in all tissues tested. Highly expressed in the adult central nervous system (CNS); hippocampus, neocortex, and cerebellum, both at dendritic spines and presynaptic axon terminals. Levels are strongly increased during enhanced neural activity.

It localises to the cell membrane. The protein resides in the nucleus. The protein localises to the endosome. Its subcellular location is the cell junction. It is found in the adherens junction. It localises to the cytoplasmic vesicle membrane. The protein resides in the cytoplasmic vesicle. The protein localises to the clathrin-coated vesicle. Its subcellular location is the membrane. It is found in the clathrin-coated pit. It localises to the cytoplasm. The protein resides in the cytosol. The catalysed reaction is L-tyrosyl-[protein] + ATP = O-phospho-L-tyrosyl-[protein] + ADP + H(+). The enzyme catalyses L-seryl-[protein] + ATP = O-phospho-L-seryl-[protein] + ADP + H(+). It catalyses the reaction L-threonyl-[protein] + ATP = O-phospho-L-threonyl-[protein] + ADP + H(+). Non-receptor tyrosine-protein and serine/threonine-protein kinase that is implicated in cell spreading and migration, cell survival, cell growth and proliferation. Transduces extracellular signals to cytosolic and nuclear effectors. Phosphorylates AKT1, AR, MCF2, WASL and WWOX. Implicated in trafficking and clathrin-mediated endocytosis through binding to epidermal growth factor receptor (EGFR) and clathrin. Binds to both poly- and mono-ubiquitin and regulates ligand-induced degradation of EGFR, thereby contributing to the accumulation of EGFR at the limiting membrane of early endosomes. Downstream effector of CDC42 which mediates CDC42-dependent cell migration via phosphorylation of BCAR1. May be involved both in adult synaptic function and plasticity and in brain development. Activates AKT1 by phosphorylating it on 'Tyr-176'. Phosphorylates AR on 'Tyr-267' and 'Tyr-363' thereby promoting its recruitment to androgen-responsive enhancers (AREs). Phosphorylates WWOX on 'Tyr-287'. Phosphorylates MCF2, thereby enhancing its activity as a guanine nucleotide exchange factor (GEF) toward Rho family proteins. Contributes to the control of AXL receptor levels. Confers metastatic properties on cancer cells and promotes tumor growth by negatively regulating tumor suppressor such as WWOX and positively regulating pro-survival factors such as AKT1 and AR. This is Activated CDC42 kinase 1 (Tnk2) from Mus musculus (Mouse).